A 408-amino-acid chain; its full sequence is 1-deoxy-D-xylulose 5-phosphate reductoisomerase (408 aa).

NADPH contacts are provided by T26, G27, S28, I29, and N143. K144 contributes to the 1-deoxy-D-xylulose 5-phosphate binding site. E145 is an NADPH binding site. Position 167 (D167) interacts with Mn(2+). 1-deoxy-D-xylulose 5-phosphate is bound by residues S168, E169, S193, and H216. E169 contacts Mn(2+). G222 provides a ligand contact to NADPH. 1-deoxy-D-xylulose 5-phosphate-binding residues include S229, N234, K235, and E238. E238 lines the Mn(2+) pocket.

Belongs to the DXR family. Requires Mg(2+) as cofactor. Mn(2+) serves as cofactor.

The catalysed reaction is 2-C-methyl-D-erythritol 4-phosphate + NADP(+) = 1-deoxy-D-xylulose 5-phosphate + NADPH + H(+). The protein operates within isoprenoid biosynthesis; isopentenyl diphosphate biosynthesis via DXP pathway; isopentenyl diphosphate from 1-deoxy-D-xylulose 5-phosphate: step 1/6. Its function is as follows. Catalyzes the NADPH-dependent rearrangement and reduction of 1-deoxy-D-xylulose-5-phosphate (DXP) to 2-C-methyl-D-erythritol 4-phosphate (MEP). This Corynebacterium jeikeium (strain K411) protein is 1-deoxy-D-xylulose 5-phosphate reductoisomerase.